The sequence spans 1620 residues: ABC-type organic anion transporter ABCA8B (1620 aa).

7 consecutive transmembrane segments (helical) span residues 30–50 (SLME…YPHG), 223–243 (FFIF…SINV), 267–287 (SWGL…ALVI), 298–318 (FMVV…LAFL), 326–346 (SVLT…LGFT), 352–372 (LPAP…TLGM), and 396–416 (LIIA…ALMM). The ABC transporter 1 domain maps to 479–714 (IRIRNISKEY…WGVGYHLSLQ (236 aa)). Residue 515–522 (GHSGAGKS) participates in ATP binding. The N-linked (GlcNAc...) asparagine glycan is linked to N723. The next 8 helical transmembrane spans lie at 860 to 880 (TLLS…FENI), 979 to 999 (CFPV…KPSA), 1023 to 1043 (TAFW…SSVT), 1069 to 1089 (MVDI…DYLF), 1105 to 1125 (IPCS…ISFI), 1135 to 1155 (IWSL…LLAF), 1164 to 1184 (IIFL…LHLF), and 1194 to 1214 (VIEP…FIFT). The ABC transporter 2 domain maps to 1283-1516 (LRKEYAGKQK…FGKDYLLEMK (234 aa)). Residue 1321-1328 (GHNGAGKS) participates in ATP binding.

This sequence belongs to the ABC transporter superfamily. ABCA family. Expressed in heart, brain, lung, liver and skeletal muscle. Highly expressed in the liver, and is also abundant in heart and skeletal muscle. Highly expressed in liver.

The protein localises to the cell membrane. The protein resides in the basolateral cell membrane. It carries out the reaction taurocholate(in) + ATP + H2O = taurocholate(out) + ADP + phosphate + H(+). It catalyses the reaction cholesterol(in) + ATP + H2O = cholesterol(out) + ADP + phosphate + H(+). Its activity is regulated as follows. Cholesterol efflux is increased by extracellularly applied taurocholate. In terms of biological role, mediates cholesterol and taurocholate efflux. Through the interaction with ABCA1 potentiates the cholesterol efflux to lipid-free APOA1, in turn regulates high-density lipoprotein cholesterol levels. The chain is ABC-type organic anion transporter ABCA8B from Mus musculus (Mouse).